A 528-amino-acid chain; its full sequence is Phosphoenolpyruvate carboxykinase (ATP) (528 aa).

Substrate-binding residues include R56, Y192, and K198. ATP is bound by residues K198, H217, and 233–241 (GLSGTGKTT). Mn(2+) contacts are provided by K198 and H217. D254 serves as a coordination point for Mn(2+). ATP-binding residues include E282, R319, and T444. Substrate is bound at residue R319.

The protein belongs to the phosphoenolpyruvate carboxykinase (ATP) family. Mn(2+) is required as a cofactor.

The protein resides in the cytoplasm. The catalysed reaction is oxaloacetate + ATP = phosphoenolpyruvate + ADP + CO2. Its pathway is carbohydrate biosynthesis; gluconeogenesis. Involved in the gluconeogenesis. Catalyzes the conversion of oxaloacetate (OAA) to phosphoenolpyruvate (PEP) through direct phosphoryl transfer between the nucleoside triphosphate and OAA. This chain is Phosphoenolpyruvate carboxykinase (ATP), found in Geobacillus thermodenitrificans (strain NG80-2).